Here is a 70-residue protein sequence, read N- to C-terminus: Insulin (70 aa).

3 disulfide bridges follow: C7-C56, C19-C69, and C55-C60. The propeptide at 33-49 (FVDSLAGYSKHQNGGIS) is c peptide.

It belongs to the insulin family. In terms of assembly, heterodimer of a B chain and an A chain linked by two disulfide bonds.

The protein resides in the secreted. Insulin decreases blood glucose concentration. It increases cell permeability to monosaccharides, amino acids and fatty acids. It accelerates glycolysis, the pentose phosphate cycle, and glycogen synthesis in liver. This is Insulin (ins) from Torpedo marmorata (Marbled electric ray).